The following is a 430-amino-acid chain: Histidine--tRNA ligase (430 aa).

The protein belongs to the class-II aminoacyl-tRNA synthetase family. As to quaternary structure, homodimer.

It is found in the cytoplasm. The enzyme catalyses tRNA(His) + L-histidine + ATP = L-histidyl-tRNA(His) + AMP + diphosphate + H(+). This Chlamydia abortus (strain DSM 27085 / S26/3) (Chlamydophila abortus) protein is Histidine--tRNA ligase.